We begin with the raw amino-acid sequence, 116 residues long: PTS system N,N'-diacetylchitobiose-specific EIIA component (116 aa).

The 99-residue stretch at 15–113 folds into the PTS EIIA type-3 domain; it reads EELEEVVMGL…ITELIELHEK (99 aa). The active-site Tele-phosphohistidine intermediate is the H89. H89 bears the Phosphohistidine; by HPr mark.

Forms a complex with ChbB (EIIB). ChbA is a homotrimer. Mg(2+) is required as a cofactor.

The protein localises to the cytoplasm. Its function is as follows. The phosphoenolpyruvate-dependent sugar phosphotransferase system (sugar PTS), a major carbohydrate active transport system, catalyzes the phosphorylation of incoming sugar substrates concomitantly with their translocation across the cell membrane. The enzyme II ChbABC PTS system is involved in the transport of the chitin disaccharide N,N'-diacetylchitobiose (GlcNAc2). The polypeptide is PTS system N,N'-diacetylchitobiose-specific EIIA component (chbA) (Escherichia coli O157:H7).